Consider the following 77-residue polypeptide: Small VCP/p97-interacting protein (77 aa).

Disordered regions lie at residues 1 to 20 (MGLC…DLEE) and 25 to 77 (LAEA…WTVS). Residue G2 is the site of N-myristoyl glycine attachment. 2 S-palmitoyl cysteine lipidation sites follow: C4 and C7. Residues 21–33 (KRAKLAEAAERRQ) are VCP/p97-interacting motif (VIM). Basic and acidic residues predominate over residues 25-37 (LAEAAERRQKEAA). S46 carries the phosphoserine modification.

This sequence belongs to the SVIP family. As to quaternary structure, interacts (via VIM motif) with VCP/p97. Forms a complex with VCP/p97 and DERL1.

The protein localises to the membrane. The protein resides in the smooth endoplasmic reticulum membrane. It is found in the golgi apparatus membrane. It localises to the cell membrane. Its subcellular location is the lysosome membrane. In terms of biological role, negative regulator of the ER-associated degradation pathway (ERAD) of misfolded proteins. It competes with AMFR/gp78 for binding VCP/p97, and inhibits AMFR/gp78-VCP/p97 complex formation that is required for degradation of ERAD substrates. Involved in the regulation of adrenal cortisol and dehydroepiandrosterone (DHEA) biosynthesis. In Homo sapiens (Human), this protein is Small VCP/p97-interacting protein (SVIP).